Reading from the N-terminus, the 540-residue chain is Chaperonin GroEL 1 (540 aa).

Residues 30–33 (TLGP), Lys51, 87–91 (DGTTT), Gly415, 480–482 (NAA), and Asp496 each bind ATP.

Belongs to the chaperonin (HSP60) family. In terms of assembly, forms a cylinder of 14 subunits composed of two heptameric rings stacked back-to-back. Interacts with the co-chaperonin GroES.

It localises to the cytoplasm. The catalysed reaction is ATP + H2O + a folded polypeptide = ADP + phosphate + an unfolded polypeptide.. Together with its co-chaperonin GroES, plays an essential role in assisting protein folding. The GroEL-GroES system forms a nano-cage that allows encapsulation of the non-native substrate proteins and provides a physical environment optimized to promote and accelerate protein folding. This is Chaperonin GroEL 1 from Bradyrhizobium diazoefficiens (strain JCM 10833 / BCRC 13528 / IAM 13628 / NBRC 14792 / USDA 110).